The following is a 358-amino-acid chain: Peptide chain release factor 1 (358 aa).

Glutamine 233 bears the N5-methylglutamine mark.

The protein belongs to the prokaryotic/mitochondrial release factor family. Post-translationally, methylated by PrmC. Methylation increases the termination efficiency of RF1.

It localises to the cytoplasm. Peptide chain release factor 1 directs the termination of translation in response to the peptide chain termination codons UAG and UAA. This Geobacillus sp. (strain WCH70) protein is Peptide chain release factor 1.